Reading from the N-terminus, the 1210-residue chain is V-type proton ATPase 116 kDa subunit a 4 (1210 aa).

At 1–715 the chain is on the cytoplasmic side; that stretch reads MSSFSNVGFV…YTIITFPFLF (715 aa). The span at 259 to 271 shows a compositional bias: low complexity; sequence SSKISFTSSSPSP. Positions 259–292 are disordered; it reads SSKISFTSSSPSPQRNPKNEAQKNSSSKREETSM. Residues 275-291 show a composition bias toward basic and acidic residues; that stretch reads PKNEAQKNSSSKREETS. Positions 339–405 form a coiled coil; sequence FVKQMRRCEE…EREFLDLNNN (67 aa). A helical membrane pass occupies residues 716-736; that stretch reads AVMFGDAAHGAILLLAALFFI. Residues 737–760 are Extracellular-facing; the sequence is RNERKIESKKIRDEIFNTFYGGRY. A helical membrane pass occupies residues 761–781; it reads IMMLMGIFSIYTGFLYNDAFA. Topologically, residues 782-855 are cytoplasmic; that stretch reads KSFNVFGSGW…SFLNSMKMKA (74 aa). The chain crosses the membrane as a helical span at residues 856 to 876; that stretch reads SVIIGITQMTFGVFLSVLNHI. Residues 877–892 lie on the Extracellular side of the membrane; sequence HFKSYIDIISNFIPQV. Residues 893–913 form a helical membrane-spanning segment; the sequence is IFLSCIFIYLCIQIIVKWIFF. Residues 914 to 976 lie on the Cytoplasmic side of the membrane; the sequence is SVNAENVFGF…WYPNQRLVET (63 aa). Residues 977–997 form a helical membrane-spanning segment; that stretch reads ILISISLACIPIMLFGKPLWV. The Extracellular portion of the chain corresponds to 998–1127; the sequence is RFVTSKRHKL…NETIAMCLKP (130 aa). Residues Asn1010, Asn1019, and Asn1118 are each glycosylated (N-linked (GlcNAc...) asparagine). Residues 1128-1148 traverse the membrane as a helical segment; sequence VVACVAFFIFASLSLSILIMM. Over 1149–1210 the chain is Cytoplasmic; the sequence is EGLSAFLHAL…DISSGQHLHI (62 aa).

The protein belongs to the V-ATPase 116 kDa subunit family. V-ATPase is a heteromultimeric enzyme made up of two complexes: the ATP-hydrolytic V1 complex and the proton translocation V0 complex. The V1 complex consists of three catalytic AB heterodimers that form a heterohexamer, three peripheral stalks each consisting of EG heterodimers, one central rotor including subunits D and F, and the regulatory subunits C and H. The proton translocation complex V0 consists of the proton transport subunit a, a ring of proteolipid subunits c9c'', rotary subunit d, subunits e and f, and the accessory subunits vah-19/Ac45 and vah-20/PRR. Expressed in uterus.

The protein localises to the membrane. In terms of biological role, subunit of the V0 complex of vacuolar(H+)-ATPase (V-ATPase), a multisubunit enzyme composed of a peripheral complex (V1) that hydrolyzes ATP and a membrane integral complex (V0) that translocates protons. V-ATPase is responsible for acidifying and maintaining the pH of intracellular compartments and in some cell types, is targeted to the plasma membrane, where it is responsible for acidifying the extracellular environment. The sequence is that of V-type proton ATPase 116 kDa subunit a 4 from Caenorhabditis elegans.